The following is an 81-amino-acid chain: Probable antimicrobial peptide Con13 (81 aa).

Residues 1–22 form the signal peptide; that stretch reads MNRKLLLVFLVVAMLVMQPAEA. The propeptide occupies 66–81; the sequence is EAGQIPFDEFMDVLYS.

It belongs to the non-disulfide-bridged peptide (NDBP) superfamily. Long chain multifunctional peptide (group 2) family. Expressed by the venom gland.

The protein localises to the secreted. The protein resides in the target cell membrane. At high concentrations, acts as a pore former in cellular membranes and causes the leakage of the cells. At submicromolar concentrations, degranulates granulocytes and has a weak hemolytic activity against human erythrocytes. Also strongly inhibits the production of superoxide anions. Has a strong antibacterial activity against Gram-negative bacteria but is less active against Gram-positive bacteria. Also has antifungal activity. The sequence is that of Probable antimicrobial peptide Con13 from Opisthacanthus cayaporum (South American scorpion).